Reading from the N-terminus, the 310-residue chain is p-hydroxybenzoic acid efflux pump subunit AaeA (310 aa).

The chain crosses the membrane as a helical span at residues 12–32 (AITLVLVILAFIAIFRAWVYY).

The protein belongs to the membrane fusion protein (MFP) (TC 8.A.1) family.

It is found in the cell inner membrane. In terms of biological role, forms an efflux pump with AaeB. This chain is p-hydroxybenzoic acid efflux pump subunit AaeA, found in Salmonella gallinarum (strain 287/91 / NCTC 13346).